The primary structure comprises 372 residues: 3 beta-hydroxysteroid dehydrogenase/Delta 5--&gt;4-isomerase type 2 (372 aa).

The active-site Proton acceptor is Tyr-154. Residue Lys-158 coordinates NAD(+). A helical membrane pass occupies residues 287–307; it reads LTLMYWIGFLLEVVSFLLSPI.

It belongs to the 3-beta-HSD family. As to expression, expressed in adrenal gland, testis and ovary.

It is found in the endoplasmic reticulum membrane. The protein localises to the mitochondrion membrane. The enzyme catalyses a 3beta-hydroxy-Delta(5)-steroid + NAD(+) = a 3-oxo-Delta(5)-steroid + NADH + H(+). It catalyses the reaction a 3-oxo-Delta(5)-steroid = a 3-oxo-Delta(4)-steroid. The catalysed reaction is pregnenolone + NAD(+) = pregn-5-ene-3,20-dione + NADH + H(+). It carries out the reaction pregn-5-ene-3,20-dione = progesterone. The enzyme catalyses 3beta-hydroxyandrost-5-en-17-one + NAD(+) = androst-5-ene-3,17-dione + NADH + H(+). It catalyses the reaction androst-5-ene-3,17-dione = androst-4-ene-3,17-dione. The protein operates within lipid metabolism; steroid biosynthesis. Its function is as follows. 3-beta-HSD is a bifunctional enzyme, that catalyzes the oxidative conversion of Delta(5)-ene-3-beta-hydroxy steroid, and the oxidative conversion of ketosteroids. The 3-beta-HSD enzymatic system plays a crucial role in the biosynthesis of all classes of hormonal steroids. This is 3 beta-hydroxysteroid dehydrogenase/Delta 5--&gt;4-isomerase type 2 from Homo sapiens (Human).